The chain runs to 940 residues: UvrABC system protein A (940 aa).

31 to 38 (GLSGSGKS) is an ATP binding site. A C4-type zinc finger spans residues 253–280 (CPICGYSMRELEPRLFSFNNPAGACPTC). ABC transporter domains lie at 310–587 (WDRR…PESL) and 607–937 (ANPE…RFLK). Residue 640–647 (GVSGSGKS) coordinates ATP. The segment at 740 to 766 (CEACQGDGVIKVEMHFLPDIYVPCDQC) adopts a C4-type zinc-finger fold.

It belongs to the ABC transporter superfamily. UvrA family. As to quaternary structure, forms a heterotetramer with UvrB during the search for lesions. Interacts with TRCF (Mfd). UvrB and TRCF binding to UvrA could be mutually exclusive.

The protein localises to the cytoplasm. Its function is as follows. The UvrABC repair system catalyzes the recognition and processing of DNA lesions. UvrA is an ATPase and a DNA-binding protein. A damage recognition complex composed of 2 UvrA and 2 UvrB subunits scans DNA for abnormalities. When the presence of a lesion has been verified by UvrB, the UvrA molecules dissociate. This chain is UvrABC system protein A, found in Escherichia coli (strain K12).